Reading from the N-terminus, the 255-residue chain is uncharacterized protein (255 aa).

The segment covering 1–10 (MSDSIHRRKV) has biased composition (basic residues). Residues 1 to 78 (MSDSIHRRKV…SPMRGLPMEE (78 aa)) form a disordered region. Positions 44–61 (VFERSFSEPSLNRHRDGQ) are enriched in basic and acidic residues.

This is an uncharacterized protein from Arabidopsis thaliana (Mouse-ear cress).